A 599-amino-acid polypeptide reads, in one-letter code: Aspartate--tRNA(Asp/Asn) ligase (599 aa).

Glu172 contributes to the L-aspartate binding site. Positions 196–199 (QLFK) are aspartate. Arg218 serves as a coordination point for L-aspartate. Residues 218-220 (RDE) and Gln227 each bind ATP. His451 serves as a coordination point for L-aspartate. Glu485 is an ATP binding site. Arg492 is a binding site for L-aspartate. ATP is bound at residue 537 to 540 (GLDR).

The protein belongs to the class-II aminoacyl-tRNA synthetase family. Type 1 subfamily. As to quaternary structure, homodimer.

It localises to the cytoplasm. The enzyme catalyses tRNA(Asx) + L-aspartate + ATP = L-aspartyl-tRNA(Asx) + AMP + diphosphate. Its function is as follows. Aspartyl-tRNA synthetase with relaxed tRNA specificity since it is able to aspartylate not only its cognate tRNA(Asp) but also tRNA(Asn). Reaction proceeds in two steps: L-aspartate is first activated by ATP to form Asp-AMP and then transferred to the acceptor end of tRNA(Asp/Asn). This is Aspartate--tRNA(Asp/Asn) ligase from Dechloromonas aromatica (strain RCB).